A 282-amino-acid chain; its full sequence is MASILTNSSALTALQTLASTNKSLESTQNRISTGLRISEASDNASYWSIATSMKSDNKANSAVQDALGLGAGKVDTAYSAINKIRESVDDIKTKLVSAMGASTEDKGKIETEIKSIVANINSALSNANYAGSNLLNGPTTDLNVVASYNRSGNAVAVDKITVKATDTDAKTMVKDIVDAGFFTSASDDTAIGTALNTVETALASLATGAATLGAAKSQIDSQKSFLSGLQDSIEKGVGTLVDADMNKESARLSALQVQQQLGVQALSIANSSNQSILSLFRG.

The protein belongs to the bacterial flagellin family.

The protein resides in the secreted. The protein localises to the bacterial flagellum. In terms of biological role, flagellin is the subunit protein which polymerizes to form the filaments of bacterial flagella. The flagellum is required to cause a persistent disease in a murine model of infection. The sequence is that of Flagellin (fliC) from Brucella melitensis biotype 1 (strain ATCC 23456 / CCUG 17765 / NCTC 10094 / 16M).